Consider the following 906-residue polypeptide: MAEAVVSFGVEKLWELLSRESARLNGIDEQVDGLKRQLGRLQSLLKDADAKKNETERVRNFLEDVKDIVYDADDIIESFLLNELRGKEKGIKKQVRTLACFLVDRRKFASDIEGITKRISEVIVGMQSLGIQHIADGGGRSLSLQERQREIRQTFSRNSESDLVGLDQSVEELVDHLVENDSVQVVSVSGMGGIGKTTLARQVFHHDIVRRHFDGFSWVCVSQQFTRKDVWQRILQDLRPYDEGIIQMDEYTLQGELFELLESGRYLLVLDDVWKEEDWDRIKAVFPHKRGWKMLLTSRNEGLGLHADPTCFAFRPRILTPEQSWKLFERIVSSRRDKTEFKVDEAMGKEMVTYCGGLPLAVKVLGGLLAKKHTVLEWKRVHSNIVTHIVGKSGLSDDNSNSVYRVLSLSYEDLPMQLKHCFFYLAHFPEDYKIDVKILFNYWVAEGIITPFHDGSTIQDTGESYLEELVRRNMVVVEESYLTSRIEYCQMHDMMREVCLSKAKEENFIRVVKVPTTTSTTINAQSPCRSRRLVLHSGNALHMLGHKDNKKARSVLIFGVEEKFWKPRGFQCLPLLRVLDLSYVQFEGGKLPSSIGDLIHLRFLSLYEAGVSHLPSSLGNLKLLLCLNLGVADRLLVHVPNVLKEMQELRYLRLPRSMPAKTKLELGDLVNLESLTNFSTKHGSVTDLLRMTKLSVLNVIFSGECTFETLLLSLRELRNLETLSFHDFQKVSVANHGGELLVLDFIHLKDLTLSMHLPRFPDQYRFPPHLAHIWLIGCRMEEDPMPILEKLLHLKSVYLSSGAFLGRRMVCSKGGFPQLLALKMSYKKELVEWRVEEGSMPCLRTLTIDNCKKLKQLPDGLKYVTCLKELKIERMKREWTERLVIGGEDYYKVQHIPSVQFINCDH.

Residues E15–I68 are a coiled coil. Positions L144–D454 constitute an NB-ARC domain. G190–T197 lines the ATP pocket. LRR repeat units lie at residues L573 to D597, L598 to L621, L623 to K644, M646 to N671, L672 to V696, E704 to D727, L740 to F766, P767 to K790, L791 to Q818, and M840 to T865.

This sequence belongs to the disease resistance NB-LRR family. RPP8/HRT subfamily.

Functionally, potential disease resistance protein. The polypeptide is Probable disease resistance RPP8-like protein 2 (RPP8L2) (Arabidopsis thaliana (Mouse-ear cress)).